Reading from the N-terminus, the 1230-residue chain is MSSRNWTGPQEAAIGCREKNLLVAAGAGSGKTAVLVERVIRRISDPAAPVDVDRLLVVTFTNAAAAEMRKRVAEALERELEKHPGMPLLEHQLRLLPQADITTIHSFCAELLRRYHYLIDLDPEFRVADETEAAILRQETLEEFFEEQYRVITGDPDLEFLVEAYGGERDDLKLQNLVSGLHRFARSNPWPEAWLARAAAFGADPQGLDGDGPLAWGLRDLVGTGLEAAVFELRAALEAAKAPGGPAVYADALAAEVEGTARLAGLVAGDWEPLRAAFLAFGFTPRLPAARAGVDQELKDLCSRCRKKAKERIQNLKETFFARRPEELLSEMAALGPAMRRLAALAADFGEAYRTAKLARNLVDFADLEHYCLQILLAPGSTPEAPVPSPVAAGLREYYVEVLVDEYQDINAVQETILRLVSRQDAAAPNLFMVGDVKQSIYRFRLAEPALFLEKYRAFDTGEDAGGARRIDLSHNFRSRESIIHAVNAVFRRIMTPAVGELAYDTAAELVCGGTPAQLEGSGPPVEVHLLGAPTSVGRDTAGTADDEPDRSDEADLTAVQREARLVAGIIRRLAGLGGECTVPYRDIVVLMRATTGKAGTYLEEFRRQNIPAYAKVGTGYFEAVEVETVLSLLKVIDNPHQDIPLAGVLRSPLVGLGAAELAAVRLADKEGDFFRAVVAAAGQGGRLGAVLAGFLERLEKWRSQARCGSLADLIWDVYRTTGYYDYVGGLPGGAGRQANLRALYDRARQYEATAFRGLFRFLRFIELLQEGGQDLGPAPALAESENVVRIMSIHQAKGLEFPVVILADMGRRFYMPDLNGEVLLHKDLGLGPYFVDPGARVSHPTAAWHVVRERLRREQLAEEMRILYVAMTRARERLILTGSAGRLEQAVLRWSHAAAGDGETLPVPVLAEAESFLDWVMPVLMAHPDGEPLRRLAVRSRPAAGTPKDRSRWEVHLHRPEDLEEAAGADPDTAAVLESLRRLAPIPADGGLDEAVHRALSWHYPWSALASCGAKISATEVKRRFAAAAAGEEEVPAVFPYRAPPARPAFLETARGLSPQAFGRAMHVVLQHLDLAGDLSVDGIRAQVAGLEEREFLTATEARAIDAEKLAGLFAGGLGRRLAGALWVRREWPFCLVVPAHEIYPGLEGHPEERVMVQGIIDCLFAEPDGLVLVDYKTDRVGPGGEAALADRYRGQLDLYARAVEAVLRRRVKERYLFLVMTGSAQIIQ.

The 477-residue stretch at 4-480 (RNWTGPQEAA…IDLSHNFRSR (477 aa)) folds into the UvrD-like helicase ATP-binding domain. 25–32 (AGAGSGKT) lines the ATP pocket. A UvrD-like helicase C-terminal domain is found at 517 to 799 (AQLEGSGPPV…RIMSIHQAKG (283 aa)). The tract at residues 535-554 (TSVGRDTAGTADDEPDRSDE) is disordered. Residues 545 to 554 (ADDEPDRSDE) show a composition bias toward acidic residues.

It belongs to the helicase family. AddA subfamily. In terms of assembly, heterodimer of AddA and AddB/RexB. Mg(2+) is required as a cofactor.

It carries out the reaction Couples ATP hydrolysis with the unwinding of duplex DNA by translocating in the 3'-5' direction.. It catalyses the reaction ATP + H2O = ADP + phosphate + H(+). Its function is as follows. The heterodimer acts as both an ATP-dependent DNA helicase and an ATP-dependent, dual-direction single-stranded exonuclease. Recognizes the chi site generating a DNA molecule suitable for the initiation of homologous recombination. The AddA nuclease domain is required for chi fragment generation; this subunit has the helicase and 3' -&gt; 5' nuclease activities. The protein is ATP-dependent helicase/nuclease subunit A of Desulforudis audaxviator (strain MP104C).